Consider the following 640-residue polypeptide: F-box protein MET30 (640 aa).

Positions 1-19 (MRRERQRMMSFEDKDKDDL) are enriched in basic and acidic residues. The disordered stretch occupies residues 1–84 (MRRERQRMMS…ATNDSGTRVQ (84 aa)). Positions 1-299 (MRRERQRMMS…KGHCRIQEFK (299 aa)) are necessary to mediate nuclear localization. Polar residues-rich tracts occupy residues 45-56 (TGSSDDLAQGSS) and 64-82 (ATRS…SGTR). Ser67 carries the post-translational modification Phosphoserine. The tract at residues 180 to 225 (KIDFISILPQELSLKILSYLDCQSLCNATRVCRKWQKLADDDRVWY) is interaction with SKP1/CBF3D. The interval 180 to 277 (KIDFISILPQ…TQTTRPWKVI (98 aa)) is important for mediating homomultimerization. One can recognise an F-box domain in the interval 181 to 227 (IDFISILPQELSLKILSYLDCQSLCNATRVCRKWQKLADDDRVWYHM). Residues 277–640 (IYRERFKVES…VKMYKFDLND (364 aa)) are interaction with MET4. 8 WD repeats span residues 300 to 328 (GHMD…GIWD), 340 to 368 (GHSD…RVWN), 380 to 408 (GHSD…KVWH), 419 to 449 (GHTE…RMWD), 461 to 499 (GHVG…TMTD), 509 to 538 (NEQE…KLWD), 550 to 578 (GHVE…KVWD), and 607 to 635 (DKVA…KMYK). Residues 481–495 (ATDNTSDGSSPQDDP) are compositionally biased toward polar residues. The interval 481 to 516 (ATDNTSDGSSPQDDPTMTDGADESDTPSNEQETVLD) is disordered.

Belongs to the WD repeat MET30/SCONB/SCON-2 family. As to quaternary structure, homomultimer. Interacts with CDC53 and SKP1/CBF3D to form the E3 ubiquitin ligase complex SCF(Met30). Interacts with MET4.

The protein localises to the cytoplasm. It localises to the nucleus. It functions in the pathway protein modification; protein ubiquitination. Substrate-recognition component of the SCF(Met30) complex, an E3 ubiquitin ligase complex that mediates the ubiquitination and subsequent proteasomal degradation of target proteins. Negatively regulates sulfur amino acids biosynthesis genes expression. Controls cell cycle function (being required for the G1/S transition and M-phase but not the S-phase), sulfur metabolism, and methionine biosynthesis as part of the SCF(Met30) complex. Required for the efficient binding of CDC45 and MCM proteins to origins of replication. Required for efficient expression of G1 cyclins. The SCF(Met30) complex catalyzes ubiquitination and degradation of the Cdk-inhibitory kinase SWE1. Involved in the S-adenosylmethionine (AdoMet)-mediated inhibition of the transcription function of MET4. The SCF(Met30) complex mediates ubiquitination and subsequent degradation of MET4 and the cellular response to cadmium. The SCF(Met30) complex acts as an inhibitor of autophagy by promoting ubiquitination and degradation of ATG9 in normal conditions. In Saccharomyces cerevisiae (strain ATCC 204508 / S288c) (Baker's yeast), this protein is F-box protein MET30.